The chain runs to 618 residues: Proline--tRNA ligase (618 aa).

Belongs to the class-II aminoacyl-tRNA synthetase family. ProS type 1 subfamily. Homodimer.

It is found in the cytoplasm. The catalysed reaction is tRNA(Pro) + L-proline + ATP = L-prolyl-tRNA(Pro) + AMP + diphosphate. Its function is as follows. Catalyzes the attachment of proline to tRNA(Pro) in a two-step reaction: proline is first activated by ATP to form Pro-AMP and then transferred to the acceptor end of tRNA(Pro). As ProRS can inadvertently accommodate and process non-cognate amino acids such as alanine and cysteine, to avoid such errors it has two additional distinct editing activities against alanine. One activity is designated as 'pretransfer' editing and involves the tRNA(Pro)-independent hydrolysis of activated Ala-AMP. The other activity is designated 'posttransfer' editing and involves deacylation of mischarged Ala-tRNA(Pro). The misacylated Cys-tRNA(Pro) is not edited by ProRS. In Streptococcus pyogenes serotype M3 (strain ATCC BAA-595 / MGAS315), this protein is Proline--tRNA ligase.